A 448-amino-acid chain; its full sequence is Hyaluronidase conohyal-Cn1 (448 aa).

A signal peptide spans 1-18 (MRAVVVVTGLVVVVVATA). A propeptide spanning residues 19–33 (LSLPNHDVKSATSSR) is cleaved from the precursor. The segment at 26 to 55 (VKSATSSRSSSDYQGSSGDDCDEGLPPPDQ) is disordered. Residues 31-43 (SSRSSSDYQGSSG) show a composition bias toward low complexity. C67 and C344 are disulfide-bonded. N141 is a glycosylation site (N-linked (GlcNAc...) asparagine). Catalysis depends on E151, which acts as the Proton donor. N-linked (GlcNAc...) asparagine glycosylation is found at N169 and N361. Cystine bridges form between C369–C380, C374–C413, and C415–C424. The EGF-like domain occupies 413-424 (CRCYSAWEGACC).

Belongs to the glycosyl hydrolase 56 family. In terms of tissue distribution, expressed by the venom duct.

The protein localises to the secreted. It catalyses the reaction Random hydrolysis of (1-&gt;4)-linkages between N-acetyl-beta-D-glucosamine and D-glucuronate residues in hyaluronate.. Functionally, hyaluronidase catalyzes the hydrolysis of hyaluronic acid (HA), an anionic, nonsulfated glycosaminoglycan distributed widely throughout connective, epithelial, and neural tissues. In venom, they are known to enhance diffusion of the venom by degrading the extracellular matrix. This is Hyaluronidase conohyal-Cn1 from Conus consors (Singed cone).